We begin with the raw amino-acid sequence, 178 residues long: Interleukin-17B (178 aa).

A signal peptide spans Met-1–Pro-22. The disordered stretch occupies residues Gln-21–Gln-44. The N-linked (GlcNAc...) asparagine glycan is linked to Asn-75. 2 disulfides stabilise this stretch: Cys-121-Cys-176 and Cys-126-Cys-178.

Belongs to the IL-17 family.

Its subcellular location is the secreted. Stimulates the release of tumor necrosis factor alpha and IL-1-beta from the monocytic cell line THP-1. The polypeptide is Interleukin-17B (IL17B) (Mesocricetus auratus (Golden hamster)).